We begin with the raw amino-acid sequence, 147 residues long: D-aminoacyl-tRNA deacylase (147 aa).

The short motif at 139-140 (GP) is the Gly-cisPro motif, important for rejection of L-amino acids element.

Belongs to the DTD family. In terms of assembly, homodimer.

Its subcellular location is the cytoplasm. The catalysed reaction is glycyl-tRNA(Ala) + H2O = tRNA(Ala) + glycine + H(+). The enzyme catalyses a D-aminoacyl-tRNA + H2O = a tRNA + a D-alpha-amino acid + H(+). Functionally, an aminoacyl-tRNA editing enzyme that deacylates mischarged D-aminoacyl-tRNAs. Also deacylates mischarged glycyl-tRNA(Ala), protecting cells against glycine mischarging by AlaRS. Acts via tRNA-based rather than protein-based catalysis; rejects L-amino acids rather than detecting D-amino acids in the active site. By recycling D-aminoacyl-tRNA to D-amino acids and free tRNA molecules, this enzyme counteracts the toxicity associated with the formation of D-aminoacyl-tRNA entities in vivo and helps enforce protein L-homochirality. The polypeptide is D-aminoacyl-tRNA deacylase (Rippkaea orientalis (strain PCC 8801 / RF-1) (Cyanothece sp. (strain PCC 8801))).